The primary structure comprises 154 residues: Snaclec lebecin subunit beta (154 aa).

Residues 1 to 23 (MGRIIFVSFGLLVVFLSLSGTGA) form the signal peptide. 3 disulfide bridges follow: Cys25-Cys36, Cys53-Cys150, and Cys125-Cys142. The C-type lectin domain occupies 32-151 (DEEHCYYVFF…CGDDYPFVCK (120 aa)). Asn139 carries an N-linked (GlcNAc...) asparagine glycan.

In terms of assembly, heterodimer with the alpha subunit (AC W5XDM0); disulfide-linked. As to expression, expressed by the venom gland.

The protein localises to the secreted. Its function is as follows. Inhibits human breast cancer cells (MDA-MB231) migration and proliferation, as well as their adhesion to fibrinogen and fibronectin. This inhibition may be due to the binding to receptors of the integrin family, probably alpha-v/beta-3 (ITGAV/ITGB3) (40% inhibition of cell adhesion) and alpha-5/beta-1 (ITGA5/ITGB1) (by comparison with lebectin). This Macrovipera lebetinus (Levantine viper) protein is Snaclec lebecin subunit beta.